A 264-amino-acid polypeptide reads, in one-letter code: tRNA (guanine-N(1)-)-methyltransferase (264 aa).

Residues glycine 125 and 145 to 150 (LGDFVL) contribute to the S-adenosyl-L-methionine site.

Belongs to the RNA methyltransferase TrmD family. As to quaternary structure, homodimer.

It is found in the cytoplasm. It catalyses the reaction guanosine(37) in tRNA + S-adenosyl-L-methionine = N(1)-methylguanosine(37) in tRNA + S-adenosyl-L-homocysteine + H(+). Functionally, specifically methylates guanosine-37 in various tRNAs. This chain is tRNA (guanine-N(1)-)-methyltransferase, found in Burkholderia ambifaria (strain ATCC BAA-244 / DSM 16087 / CCUG 44356 / LMG 19182 / AMMD) (Burkholderia cepacia (strain AMMD)).